A 305-amino-acid polypeptide reads, in one-letter code: MLNKLKIGTLLLLTLTACSPNSVHSVTSNPQPASAPVQQSATQATFQQTLANLEQQYQARIGVYVWDTETGHSLSYRADERFAYASTFKALLAGAVLQSLPEKDLNRTISYSQKDLVSYSPETQKYVGKGMTIAQLCEAAVRFSDNSATNLLLKELGGVEQYQRILRQLGDNVTHTNRLEPDLNQAKPNDIRDTSTPKQMAMNLNAYLLGNTLTESQKTILWNWLDNNATGNPLIRAATPTSWKVYDKSGAGKYGVRNDIAVVRIPNRKPIVMAIMSTQFTEEAKFNNKLVEDAAKQVFHTLQLN.

The N-terminal stretch at 1–33 is a signal peptide; sequence MLNKLKIGTLLLLTLTACSPNSVHSVTSNPQPA. Ser-86 functions as the Acyl-ester intermediate in the catalytic mechanism. 248–250 serves as a coordination point for substrate; sequence KSG.

The protein belongs to the class-A beta-lactamase family.

It catalyses the reaction a beta-lactam + H2O = a substituted beta-amino acid. The protein is Beta-lactamase ROB-1 (rob1) of Actinobacillus pleuropneumoniae (Haemophilus pleuropneumoniae).